Consider the following 146-residue polypeptide: Large ribosomal subunit protein uL13 (146 aa).

It belongs to the universal ribosomal protein uL13 family. Part of the 50S ribosomal subunit.

Functionally, this protein is one of the early assembly proteins of the 50S ribosomal subunit, although it is not seen to bind rRNA by itself. It is important during the early stages of 50S assembly. This Mycoplasma genitalium (strain ATCC 33530 / DSM 19775 / NCTC 10195 / G37) (Mycoplasmoides genitalium) protein is Large ribosomal subunit protein uL13.